The primary structure comprises 165 residues: Putative 4-hydroxy-4-methyl-2-oxoglutarate aldolase (165 aa).

Residues 80–83 (GGNL) and arginine 102 contribute to the substrate site. An a divalent metal cation-binding site is contributed by aspartate 103.

This sequence belongs to the class II aldolase/RraA-like family. In terms of assembly, homotrimer. Requires a divalent metal cation as cofactor.

It carries out the reaction 4-hydroxy-4-methyl-2-oxoglutarate = 2 pyruvate. The enzyme catalyses oxaloacetate + H(+) = pyruvate + CO2. In terms of biological role, catalyzes the aldol cleavage of 4-hydroxy-4-methyl-2-oxoglutarate (HMG) into 2 molecules of pyruvate. Also contains a secondary oxaloacetate (OAA) decarboxylase activity due to the common pyruvate enolate transition state formed following C-C bond cleavage in the retro-aldol and decarboxylation reactions. This is Putative 4-hydroxy-4-methyl-2-oxoglutarate aldolase from Cupriavidus taiwanensis (strain DSM 17343 / BCRC 17206 / CCUG 44338 / CIP 107171 / LMG 19424 / R1) (Ralstonia taiwanensis (strain LMG 19424)).